Reading from the N-terminus, the 330-residue chain is Stomatin-1 (330 aa).

A compositionally biased stretch (polar residues) spans 1–19 (MQPSETVEMQEMAQPSGQQ). Positions 1-27 (MQPSETVEMQEMAQPSGQQRDVEARVQ) are disordered. A helical transmembrane segment spans residues 42–62 (MFCIAMSYVLIFLTFPVSVFM).

Belongs to the band 7/mec-2 family.

The protein localises to the membrane. The protein is Stomatin-1 (sto-1) of Caenorhabditis elegans.